The following is a 115-amino-acid chain: ComG operon protein 5 (115 aa).

The propeptide at 1 to 7 (MWRENKG) is leader sequence. F8 carries the post-translational modification N-methylphenylalanine. The helical transmembrane segment at 13-31 (TMSALSLWLFVLLTVVPLW) threads the bilayer.

In terms of processing, processing of ComGE in competent cells requires ComC.

The protein resides in the cell membrane. It localises to the cell surface. Its function is as follows. Required for transformation and DNA binding. The protein is ComG operon protein 5 (comGE) of Bacillus subtilis (strain 168).